The sequence spans 106 residues: Cytochrome c2 (106 aa).

Heme c is bound by residues cysteine 19, cysteine 22, histidine 23, and methionine 84.

Belongs to the cytochrome c family. In terms of processing, binds 1 heme c group covalently per subunit.

The polypeptide is Cytochrome c2 (Rhodopila globiformis (Rhodopseudomonas globiformis)).